A 243-amino-acid chain; its full sequence is Clathrin light chain A (243 aa).

Blocked amino end (Met) is present on methionine 1. 2 disordered regions span residues 1-22 and 49-87; these read MAEL…GVAG and ILDG…GPTD. A compositionally biased stretch (gly residues) spans 10–20; that stretch reads PAGGPALGNGV. Residues 95-157 are involved in binding clathrin heavy chain; that stretch reads VDRLQSEPES…QLQKTKANNR (63 aa). Serine 100 and serine 201 each carry phosphoserine. Residue lysine 218 is modified to N6-acetyllysine. Phosphoserine is present on serine 231. The residue at position 237 (lysine 237) is an N6-acetyllysine.

This sequence belongs to the clathrin light chain family. Clathrin coats are formed from molecules containing 3 heavy chains and 3 light chains. Interacts with CALY; the interaction stimulates clathrin self-assembly and clathrin-mediated endocytosis. Interacts with CKAP5 and TACC3 forming the TACC3/ch-TOG/clathrin complex located at spindle inter-microtubules bridges; the complex implicates clathrin triskelions.

The protein resides in the cytoplasmic vesicle membrane. It localises to the membrane. The protein localises to the coated pit. It is found in the cytoplasm. Its subcellular location is the cytoskeleton. The protein resides in the spindle. In terms of biological role, clathrin is the major protein of the polyhedral coat of coated pits and vesicles. Acts as a component of the TACC3/ch-TOG/clathrin complex proposed to contribute to stabilization of kinetochore fibers of the mitotic spindle by acting as inter-microtubule bridge. The protein is Clathrin light chain A (CLTA) of Bos taurus (Bovine).